The following is a 374-amino-acid chain: Alanine racemase (374 aa).

Catalysis depends on Lys35, which acts as the Proton acceptor; specific for D-alanine. N6-(pyridoxal phosphate)lysine is present on Lys35. Arg130 provides a ligand contact to substrate. The active-site Proton acceptor; specific for L-alanine is Tyr261. Residue Met309 coordinates substrate.

The protein belongs to the alanine racemase family. Pyridoxal 5'-phosphate serves as cofactor.

It carries out the reaction L-alanine = D-alanine. Its pathway is amino-acid biosynthesis; D-alanine biosynthesis; D-alanine from L-alanine: step 1/1. Functionally, catalyzes the interconversion of L-alanine and D-alanine. May also act on other amino acids. In Albidiferax ferrireducens (strain ATCC BAA-621 / DSM 15236 / T118) (Rhodoferax ferrireducens), this protein is Alanine racemase (alr).